The following is a 301-amino-acid chain: GTPase Era (301 aa).

Residues 4–173 form the Era-type G domain; sequence KAGFVALIGK…LECISEHLSP (170 aa). Positions 12-19 are G1; sequence GKPNAGKS. 12 to 19 contributes to the GTP binding site; it reads GKPNAGKS. The interval 38–42 is G2; that stretch reads NATRK. The segment at 64 to 67 is G3; sequence DTPG. Residues 64–68 and 122–125 contribute to the GTP site; these read DTPGL and SKID. The interval 122 to 125 is G4; that stretch reads SKID. Residues 152–154 form a G5 region; it reads LSA. The KH type-2 domain maps to 204-280; the sequence is LSDEIPYESD…FLNLQVIAQK (77 aa).

The protein belongs to the TRAFAC class TrmE-Era-EngA-EngB-Septin-like GTPase superfamily. Era GTPase family. In terms of assembly, monomer.

The protein localises to the cytoplasm. Its subcellular location is the cell inner membrane. Functionally, an essential GTPase that binds both GDP and GTP, with rapid nucleotide exchange. Plays a role in 16S rRNA processing and 30S ribosomal subunit biogenesis and possibly also in cell cycle regulation and energy metabolism. This is GTPase Era from Helicobacter acinonychis (strain Sheeba).